A 175-amino-acid chain; its full sequence is Small ribosomal subunit protein uS5 (175 aa).

Residues 11–74 (LSEVLVDVNR…QAAKKRMMKV (64 aa)) enclose the S5 DRBM domain.

Belongs to the universal ribosomal protein uS5 family. In terms of assembly, part of the 30S ribosomal subunit. Contacts proteins S4 and S8.

In terms of biological role, with S4 and S12 plays an important role in translational accuracy. Located at the back of the 30S subunit body where it stabilizes the conformation of the head with respect to the body. The chain is Small ribosomal subunit protein uS5 from Rickettsia prowazekii (strain Madrid E).